A 391-amino-acid chain; its full sequence is Processive diacylglycerol beta-glucosyltransferase (391 aa).

This sequence belongs to the glycosyltransferase 28 family. UgtP subfamily.

The protein localises to the cell membrane. It catalyses the reaction a 1,2-diacyl-3-O-(beta-D-glucopyranosyl)-sn-glycerol + UDP-alpha-D-glucose = a 1,2-diacyl-3-O-(beta-D-Glc-(1-&gt;6)-beta-D-Glc)-sn-glycerol + UDP + H(+). The enzyme catalyses a 1,2-diacyl-sn-glycerol + UDP-alpha-D-glucose = a 1,2-diacyl-3-O-(beta-D-glucopyranosyl)-sn-glycerol + UDP + H(+). It participates in glycolipid metabolism; diglucosyl-diacylglycerol biosynthesis. Processive glucosyltransferase involved in the biosynthesis of both the bilayer- and non-bilayer-forming membrane glucolipids. Is able to successively transfer two glucosyl residues to diacylglycerol (DAG), thereby catalyzing the formation of beta-monoglucosyl-DAG (3-O-(beta-D-glucopyranosyl)-1,2-diacyl-sn-glycerol) and beta-diglucosyl-DAG (3-O-(beta-D-glucopyranosyl-beta-(1-&gt;6)-D-glucopyranosyl)-1,2-diacyl-sn-glycerol). Beta-diglucosyl-DAG is the predominant glycolipid found in Bacillales and is also used as a membrane anchor for lipoteichoic acid (LTA). The sequence is that of Processive diacylglycerol beta-glucosyltransferase from Staphylococcus aureus (strain MRSA252).